Here is a 213-residue protein sequence, read N- to C-terminus: Nucleoside triphosphate pyrophosphatase (213 aa).

D77 serves as the catalytic Proton acceptor.

It belongs to the Maf family. A divalent metal cation is required as a cofactor.

It localises to the cytoplasm. The catalysed reaction is a ribonucleoside 5'-triphosphate + H2O = a ribonucleoside 5'-phosphate + diphosphate + H(+). It catalyses the reaction a 2'-deoxyribonucleoside 5'-triphosphate + H2O = a 2'-deoxyribonucleoside 5'-phosphate + diphosphate + H(+). Nucleoside triphosphate pyrophosphatase. May have a dual role in cell division arrest and in preventing the incorporation of modified nucleotides into cellular nucleic acids. The protein is Nucleoside triphosphate pyrophosphatase of Cutibacterium acnes (strain DSM 16379 / KPA171202) (Propionibacterium acnes).